We begin with the raw amino-acid sequence, 206 residues long: 2,3-bisphosphoglycerate-dependent phosphoglycerate mutase (206 aa).

Residues 9–16, 22–23, R61, 88–91, K99, 115–116, and 159–160 each bind substrate; these read RHGQSEWN, TG, ERDY, RR, and GN. H10 acts as the Tele-phosphohistidine intermediate in catalysis. The Proton donor/acceptor role is filled by E88.

This sequence belongs to the phosphoglycerate mutase family. BPG-dependent PGAM subfamily. In terms of assembly, homodimer.

It carries out the reaction (2R)-2-phosphoglycerate = (2R)-3-phosphoglycerate. The protein operates within carbohydrate degradation; glycolysis; pyruvate from D-glyceraldehyde 3-phosphate: step 3/5. In terms of biological role, catalyzes the interconversion of 2-phosphoglycerate and 3-phosphoglycerate. This is 2,3-bisphosphoglycerate-dependent phosphoglycerate mutase from Mesorhizobium japonicum (strain LMG 29417 / CECT 9101 / MAFF 303099) (Mesorhizobium loti (strain MAFF 303099)).